The sequence spans 610 residues: Zinc metalloproteinase-disintegrin-like 3a (610 aa).

A signal peptide spans 1 to 19; sequence MIQVLLVTILAVFPYQGSS. The propeptide occupies 20–188; it reads IILGSGNVND…KKASQLVVTA (169 aa). The Peptidase M12B domain occupies 198 to 394; sequence RYVELVIVAD…YTPKCILNEP (197 aa). Residue Glu201 participates in Ca(2+) binding. Residue Asn217 is glycosylated (N-linked (GlcNAc...) asparagine). Asp285 is a Ca(2+) binding site. 3 disulfide bridges follow: Cys309/Cys389, Cys349/Cys373, and Cys351/Cys356. His334 is a binding site for Zn(2+). The active site involves Glu335. Positions 338 and 344 each coordinate Zn(2+). Cys389, Asn392, Val404, Asn407, Glu411, Glu414, and Asp417 together coordinate Ca(2+). Positions 402–488 constitute a Disintegrin domain; sequence PPVCGNELLE…DCPTDDFHKN (87 aa). Disulfide bonds link Cys405/Cys434, Cys416/Cys429, Cys418/Cys424, Cys428/Cys451, Cys442/Cys448, Cys447/Cys473, Cys460/Cys480, Cys467/Cys499, Cys492/Cys504, Cys511/Cys561, Cys526/Cys572, Cys539/Cys549, Cys556/Cys598, and Cys592/Cys603. The D/ECD-tripeptide motif lies at 466-468; it reads ECD.

Belongs to the venom metalloproteinase (M12B) family. P-III subfamily. It depends on Zn(2+) as a cofactor. In terms of tissue distribution, expressed by the venom gland.

The protein resides in the secreted. Its function is as follows. Snake venom metalloproteinase that impairs hemostasis in the envenomed animal. This is Zinc metalloproteinase-disintegrin-like 3a from Crotalus adamanteus (Eastern diamondback rattlesnake).